The primary structure comprises 719 residues: Phosphoribosylformylglycinamidine synthase subunit PurL (719 aa).

Residue His47 is part of the active site. The ATP site is built by Tyr50 and Lys89. Glu91 contacts Mg(2+). Substrate-binding positions include 92–95 and Arg114; that span reads SHNH. The active-site Proton acceptor is His93. Asp115 contributes to the Mg(2+) binding site. A substrate-binding site is contributed by Gln238. Residue Asp266 coordinates Mg(2+). 310–312 is a substrate binding site; that stretch reads ESQ. ATP-binding residues include Asp488 and Gly525. Residue Asn526 participates in Mg(2+) binding. Substrate is bound at residue Ser528.

It belongs to the FGAMS family. As to quaternary structure, monomer. Part of the FGAM synthase complex composed of 1 PurL, 1 PurQ and 2 PurS subunits.

The protein localises to the cytoplasm. It carries out the reaction N(2)-formyl-N(1)-(5-phospho-beta-D-ribosyl)glycinamide + L-glutamine + ATP + H2O = 2-formamido-N(1)-(5-O-phospho-beta-D-ribosyl)acetamidine + L-glutamate + ADP + phosphate + H(+). Its pathway is purine metabolism; IMP biosynthesis via de novo pathway; 5-amino-1-(5-phospho-D-ribosyl)imidazole from N(2)-formyl-N(1)-(5-phospho-D-ribosyl)glycinamide: step 1/2. Functionally, part of the phosphoribosylformylglycinamidine synthase complex involved in the purines biosynthetic pathway. Catalyzes the ATP-dependent conversion of formylglycinamide ribonucleotide (FGAR) and glutamine to yield formylglycinamidine ribonucleotide (FGAM) and glutamate. The FGAM synthase complex is composed of three subunits. PurQ produces an ammonia molecule by converting glutamine to glutamate. PurL transfers the ammonia molecule to FGAR to form FGAM in an ATP-dependent manner. PurS interacts with PurQ and PurL and is thought to assist in the transfer of the ammonia molecule from PurQ to PurL. The protein is Phosphoribosylformylglycinamidine synthase subunit PurL of Roseobacter denitrificans (strain ATCC 33942 / OCh 114) (Erythrobacter sp. (strain OCh 114)).